The chain runs to 278 residues: HTH-type transcriptional activator RhaS (278 aa).

The region spanning 174–272 is the HTH araC/xylS-type domain; it reads NQLMAWLEDH…NWSPRDIRQG (99 aa). DNA-binding regions (H-T-H motif) lie at residues 191–212 and 239–262; these read EAVA…KQHT and VTEI…RREF.

In terms of assembly, binds DNA as a dimer.

Its subcellular location is the cytoplasm. In terms of biological role, activates expression of the rhaBAD and rhaT operons. The sequence is that of HTH-type transcriptional activator RhaS from Salmonella dublin (strain CT_02021853).